The primary structure comprises 660 residues: Nuclear factor erythroid 2-related factor 3 (660 aa).

The tract at residues 120 to 214 (SAVGDGGQSA…KTEEHKMACA (95 aa)) is disordered. Gly residues predominate over residues 123–135 (GDGGQSASAGGGD). Composition is skewed to basic and acidic residues over residues 173 to 186 (MLRE…HSSQ) and 204 to 214 (SKTEEHKMACA). One can recognise a bZIP domain in the interval 541–604 (LIRDIRRRGK…DIMRQKLHGL (64 aa)). The tract at residues 543-562 (RDIRRRGKNKVAAQNCRKRK) is basic motif. A leucine-zipper region spans residues 566–573 (ILNLEDDI).

It belongs to the bZIP family. CNC subfamily. Heterodimer with MAFG, MAFK and other small MAF proteins that binds to the MAF recognition elements (MARE). In terms of tissue distribution, high level expression in brain, thymus, testis and placenta. Medium level expression in uterus, stomach and lung. Low level expression in kidney. No expression in heart, liver, spleen and ovary.

The protein resides in the nucleus. In terms of biological role, activates erythroid-specific, globin gene expression. In Mus musculus (Mouse), this protein is Nuclear factor erythroid 2-related factor 3 (Nfe2l3).